The sequence spans 209 residues: MKRLWDISPPISSQSPVFPGDTPYRQQWKWQLSPECPVNVSEITMSPHIGAHADAPLHYANGATAAGCLPLEPFLGPCRVIHALDCGPLILPEHLAHAADDMPERVLVRTAQHAAVHWWTDDFSAYAPQTIEWLASLGVRLIGIDTPSIDPATSKTLDSHHVILRRDIRVLENLVLDTVEPGDYELIALPLALVQADASPVRAVLRELG.

Phe18 lines the substrate pocket. Positions 48, 52, and 54 each coordinate Zn(2+). His58 serves as the catalytic Proton donor/acceptor. Residues His160 and Glu172 each coordinate Zn(2+).

It belongs to the Cyclase 1 superfamily. KynB family. Homodimer. The cofactor is Zn(2+).

It carries out the reaction N-formyl-L-kynurenine + H2O = L-kynurenine + formate + H(+). It participates in amino-acid degradation; L-tryptophan degradation via kynurenine pathway; L-kynurenine from L-tryptophan: step 2/2. Catalyzes the hydrolysis of N-formyl-L-kynurenine to L-kynurenine, the second step in the kynurenine pathway of tryptophan degradation. The protein is Kynurenine formamidase of Bordetella avium (strain 197N).